The chain runs to 371 residues: Assembly protein G7 (371 aa).

It belongs to the chordopoxvirinae G7 family. In terms of assembly, part of a complex composed of A30, G7, F10 kinase, A15, D2, D3, and J1. Phosphorylated on serines by F10 kinase, phosphorylation state is regulated by H1 phosphatase. In terms of processing, undergoes proteolytic processing during morphogenesis, probably required for the transformation of immature virions (IV) into mature virions (MV).

The protein localises to the host cytoplasm. It localises to the virion. In terms of biological role, late protein which is a part of a large complex required for early virion morphogenesis. This complex participates in the formation of virosomes and the incorporation of virosomal contents into nascent immature virions. This Variola virus (isolate Human/India/Ind3/1967) (VARV) protein is Assembly protein G7.